The primary structure comprises 522 residues: Putative thymidine phosphorylase (522 aa).

It belongs to the thymidine/pyrimidine-nucleoside phosphorylase family. Type 2 subfamily.

It carries out the reaction thymidine + phosphate = 2-deoxy-alpha-D-ribose 1-phosphate + thymine. The sequence is that of Putative thymidine phosphorylase from Albidiferax ferrireducens (strain ATCC BAA-621 / DSM 15236 / T118) (Rhodoferax ferrireducens).